Consider the following 566-residue polypeptide: Mitochondrial distribution and morphology protein 34 (566 aa).

Residues 1–195 (MAFNFNWSPL…LPAIIHRLSL (195 aa)) enclose the SMP-LTD domain. Disordered regions lie at residues 212–237 (PEQT…DSLG), 349–401 (GYGL…NPSV), 432–518 (PERR…SSST), and 539–566 (KLMP…AYGQ). Over residues 358-370 (RHSKAHSRKRKKR) the composition is skewed to basic residues. Positions 380-401 (TSDTASVSDESAYTETASNPSV) are enriched in polar residues. A compositionally biased stretch (basic and acidic residues) spans 444-454 (PRRDIATEMLR).

The protein belongs to the MDM34 family. Component of the ER-mitochondria encounter structure (ERMES) or MDM complex, composed of mmm1, mdm10, mdm12 and mdm34.

The protein resides in the mitochondrion outer membrane. Its function is as follows. Component of the ERMES/MDM complex, which serves as a molecular tether to connect the endoplasmic reticulum (ER) and mitochondria. Components of this complex are involved in the control of mitochondrial shape and protein biogenesis, and function in nonvesicular lipid trafficking between the ER and mitochondria. Mdm34 is required for the interaction of the ER-resident membrane protein mmm1 and the outer mitochondrial membrane-resident beta-barrel protein mdm10. In Aspergillus flavus (strain ATCC 200026 / FGSC A1120 / IAM 13836 / NRRL 3357 / JCM 12722 / SRRC 167), this protein is Mitochondrial distribution and morphology protein 34.